The following is a 222-amino-acid chain: Thiamine-phosphate synthase (222 aa).

Residues 44 to 48 and Asn75 each bind 4-amino-2-methyl-5-(diphosphooxymethyl)pyrimidine; that span reads QVRMK. Mg(2+) contacts are provided by Asp76 and Asp95. Position 114 (Thr114) interacts with 4-amino-2-methyl-5-(diphosphooxymethyl)pyrimidine. 140-142 is a binding site for 2-[(2R,5Z)-2-carboxy-4-methylthiazol-5(2H)-ylidene]ethyl phosphate; that stretch reads SRS. Residue Lys143 coordinates 4-amino-2-methyl-5-(diphosphooxymethyl)pyrimidine. Gly171 lines the 2-[(2R,5Z)-2-carboxy-4-methylthiazol-5(2H)-ylidene]ethyl phosphate pocket.

This sequence belongs to the thiamine-phosphate synthase family. Mg(2+) serves as cofactor.

The enzyme catalyses 2-[(2R,5Z)-2-carboxy-4-methylthiazol-5(2H)-ylidene]ethyl phosphate + 4-amino-2-methyl-5-(diphosphooxymethyl)pyrimidine + 2 H(+) = thiamine phosphate + CO2 + diphosphate. It carries out the reaction 2-(2-carboxy-4-methylthiazol-5-yl)ethyl phosphate + 4-amino-2-methyl-5-(diphosphooxymethyl)pyrimidine + 2 H(+) = thiamine phosphate + CO2 + diphosphate. The catalysed reaction is 4-methyl-5-(2-phosphooxyethyl)-thiazole + 4-amino-2-methyl-5-(diphosphooxymethyl)pyrimidine + H(+) = thiamine phosphate + diphosphate. It functions in the pathway cofactor biosynthesis; thiamine diphosphate biosynthesis; thiamine phosphate from 4-amino-2-methyl-5-diphosphomethylpyrimidine and 4-methyl-5-(2-phosphoethyl)-thiazole: step 1/1. Condenses 4-methyl-5-(beta-hydroxyethyl)thiazole monophosphate (THZ-P) and 2-methyl-4-amino-5-hydroxymethyl pyrimidine pyrophosphate (HMP-PP) to form thiamine monophosphate (TMP). The polypeptide is Thiamine-phosphate synthase (Anaeromyxobacter dehalogenans (strain 2CP-C)).